The primary structure comprises 548 residues: Membrane protein insertase YidC (548 aa).

The helical transmembrane segment at 6-26 threads the bilayer; sequence NLFLIAFLFVSFMIWQAWQTD. Positions 30–53 are disordered; the sequence is QPLQTQTTQNTTSAAGDAVNQGVP. The next 4 helical transmembrane spans lie at 345-365, 420-440, 458-478, and 499-519; these read KFLH…TFIV, LGGC…YYML, LAAQ…MFFI, and PVIF…YYIV.

This sequence belongs to the OXA1/ALB3/YidC family. Type 1 subfamily. As to quaternary structure, interacts with the Sec translocase complex via SecD. Specifically interacts with transmembrane segments of nascent integral membrane proteins during membrane integration.

It is found in the cell inner membrane. Functionally, required for the insertion and/or proper folding and/or complex formation of integral membrane proteins into the membrane. Involved in integration of membrane proteins that insert both dependently and independently of the Sec translocase complex, as well as at least some lipoproteins. Aids folding of multispanning membrane proteins. The protein is Membrane protein insertase YidC of Erwinia tasmaniensis (strain DSM 17950 / CFBP 7177 / CIP 109463 / NCPPB 4357 / Et1/99).